The primary structure comprises 114 residues: Iron-sulfur cluster insertion protein ErpA (114 aa).

Iron-sulfur cluster is bound by residues cysteine 42, cysteine 106, and cysteine 108.

It belongs to the HesB/IscA family. As to quaternary structure, homodimer. Iron-sulfur cluster serves as cofactor.

In terms of biological role, required for insertion of 4Fe-4S clusters for at least IspG. The sequence is that of Iron-sulfur cluster insertion protein ErpA from Cronobacter sakazakii (strain ATCC BAA-894) (Enterobacter sakazakii).